The chain runs to 324 residues: Viral cathepsin (324 aa).

A signal peptide spans 1 to 16; the sequence is MNKIMLCLLVCGVVHA. Positions 17-113 are cleaved as a propeptide — activation peptide; sequence ATYDLLKAPN…VILDRPPDRG (97 aa). 3 disulfide bridges follow: C134/C175, C168/C208, and C263/C311. The active site involves C137. The N-linked (GlcNAc...) asparagine; by host glycan is linked to N159. Catalysis depends on residues H270 and N290.

This sequence belongs to the peptidase C1 family. In terms of processing, synthesized as an inactive proenzyme and activated by proteolytic removal of the inhibitory propeptide.

The catalysed reaction is Endopeptidase of broad specificity, hydrolyzing substrates of both cathepsin L and cathepsin B.. In terms of biological role, cysteine protease that plays an essential role in host liquefaction to facilitate horizontal transmission of the virus. May participate in the degradation of foreign protein expressed by the baculovirus system. In Orgyia pseudotsugata (Douglas-fir tussock moth), this protein is Viral cathepsin (VCATH).